The sequence spans 209 residues: MINYLKGKTTQILKTPSNRNILILEVNHIGYEIQIPSRLARNLSLEEDQIVQIFTHLQIREDQQILYGFSTDSERDLFRQLININGVGTQTAIALIDTLGIEALINAIVTNDVKTLSKTPGVGPKTAERIALELKSKLSQWEQAIALKTPVSVGVPSREILEEVEMTLLALGYTDEEIDQAISAISQDNLLLKNPHVEEWLKSAIAWLS.

Residues 1–70 are domain I; the sequence is MINYLKGKTT…EDQQILYGFS (70 aa). The domain II stretch occupies residues 71–149; sequence TDSERDLFRQ…QWEQAIALKT (79 aa). Residues 150-160 are flexible linker; the sequence is PVSVGVPSREI. The tract at residues 160–209 is domain III; that stretch reads ILEEVEMTLLALGYTDEEIDQAISAISQDNLLLKNPHVEEWLKSAIAWLS.

Belongs to the RuvA family. As to quaternary structure, homotetramer. Forms an RuvA(8)-RuvB(12)-Holliday junction (HJ) complex. HJ DNA is sandwiched between 2 RuvA tetramers; dsDNA enters through RuvA and exits via RuvB. An RuvB hexamer assembles on each DNA strand where it exits the tetramer. Each RuvB hexamer is contacted by two RuvA subunits (via domain III) on 2 adjacent RuvB subunits; this complex drives branch migration. In the full resolvosome a probable DNA-RuvA(4)-RuvB(12)-RuvC(2) complex forms which resolves the HJ.

It localises to the cytoplasm. The RuvA-RuvB-RuvC complex processes Holliday junction (HJ) DNA during genetic recombination and DNA repair, while the RuvA-RuvB complex plays an important role in the rescue of blocked DNA replication forks via replication fork reversal (RFR). RuvA specifically binds to HJ cruciform DNA, conferring on it an open structure. The RuvB hexamer acts as an ATP-dependent pump, pulling dsDNA into and through the RuvAB complex. HJ branch migration allows RuvC to scan DNA until it finds its consensus sequence, where it cleaves and resolves the cruciform DNA. The chain is Holliday junction branch migration complex subunit RuvA from Gloeothece citriformis (strain PCC 7424) (Cyanothece sp. (strain PCC 7424)).